The chain runs to 328 residues: MSKKPVRVAVTGAAGQIGYALLFRIASGEMLGKDQPVILQLLEIPDEKAQKALKGVMMELEDCAFPLLAGMEAHSDPMTAFKDTDYALLVGARPRGPGMERADLLAANAQIFTAQGKALNAVASRNVKVLVVGNPANTNAYIAMKSAPDLPAKNFTAMLRLDHNRAASQIAAKTGGKVGEIEKLTVWGNHSPTMYADYRFATIGGKSVKDAINDQVWNADVFLPTVGKRGAAIIEARGLSSAASAANAAIDHMRDWALGSNGKWVTMGVPSKGEYGIPEGIVFGFPVITENGEYKIVEGLEIDAFSQERINKTLAELQGEQDGVKHLL.

Residue 12–18 (GAAGQIG) coordinates NAD(+). Substrate-binding residues include Arg-95 and Arg-101. NAD(+) is bound by residues Asn-108, Gln-115, and 132–134 (VGN). The substrate site is built by Asn-134 and Arg-165. His-190 functions as the Proton acceptor in the catalytic mechanism.

This sequence belongs to the LDH/MDH superfamily. MDH type 2 family.

The catalysed reaction is (S)-malate + NAD(+) = oxaloacetate + NADH + H(+). Catalyzes the reversible oxidation of malate to oxaloacetate. This Paracidovorax citrulli (strain AAC00-1) (Acidovorax citrulli) protein is Malate dehydrogenase.